The sequence spans 115 residues: Immunoglobulin kappa chain variable 12-41 (115 aa).

The first 20 residues, 1–20 (MSVLTQVLALLLLWLTGARC), serve as a signal peptide directing secretion. Residues 21 to 43 (DIQMTQSPASLSASVGETVTITC) form a framework-1 region. Cys-43 and Cys-108 are joined by a disulfide. The interval 44 to 54 (RASGNIHNYLA) is complementarity-determining-1. Residues 55 to 69 (WYQQKQGKSPQLLVY) are framework-2. Positions 70 to 76 (NAKTLAD) are complementarity-determining-2. A framework-3 region spans residues 77–108 (GVPSRFSGSGSGTQYSLKINSLQPEDFGSYYC). The complementarity-determining-3 stretch occupies residues 109–115 (QHFWSTP).

The chain is Immunoglobulin kappa chain variable 12-41 from Mus musculus (Mouse).